Here is a 513-residue protein sequence, read N- to C-terminus: Autophagy-related protein 18 (513 aa).

A WD 1 repeat occupies 2–40 (SDLPIINFINFNQNGTCISIGTSQGFKIFNCEPFGRFYQ). The tract at residues 167–225 (NNINIKKSDAAEDPLRKDHFAYDPSDHSHPQSTTESTSNNHNRTYSSGNNNNTNSNPNK) is disordered. Residues 172 to 195 (KKSDAAEDPLRKDHFAYDPSDHSH) are compositionally biased toward basic and acidic residues. The span at 205 to 225 (NNHNRTYSSGNNNNTNSNPNK) shows a compositional bias: low complexity. Residues 248–288 (AHKGEIAALKLSADGTLLATASEKGTIIRVFNVENGSKVYQ) form a WD 2 repeat. A necessary for proper localization to vacuole membrane region spans residues 289-292 (FRRG). The L/FRRG motif signature appears at 289-293 (FRRGT). One copy of the WD 3 repeat lies at 293-332 (TYSTKISSLSFSKDNQFLAVCSSSKTVHIFKLGEKIIDNT). Residues 333-398 (KPNELNSDDD…TVGRMIRKSS (66 aa)) are disordered. A compositionally biased stretch (acidic residues) spans 338–369 (NSDDDMDDDLLPQFENGDDEEEVDEETLDEEA).

This sequence belongs to the WD repeat PROPPIN family. In terms of assembly, component of the PI(3,5)P2 regulatory complex. Interacts with ATG2 and ATG9. The ATG2-ATG18 complex is essential for autophagosome formation.

The protein localises to the preautophagosomal structure membrane. Its subcellular location is the vacuole membrane. It is found in the endosome membrane. Its function is as follows. Component of the PI(3,5)P2 regulatory complex that regulates both the synthesis and turnover of phosphatidylinositol 3,5-bisphosphate (PtdIns(3,5)P2). Plays an important role in osmotically-induced vacuole fragmentation. Required for cytoplasm to vacuole transport (Cvt) vesicle formation, pexophagy and starvation-induced autophagy. Involved in correct ATG9 trafficking to the pre-autophagosomal structure. With ATG2, protects ATG8 from ATG4-mediated cleavage. This is Autophagy-related protein 18 from Kluyveromyces marxianus (strain DMKU3-1042 / BCC 29191 / NBRC 104275) (Yeast).